A 142-amino-acid chain; its full sequence is Protein archease (142 aa).

Ca(2+)-binding residues include D12, D141, and I142.

This sequence belongs to the archease family. In solution, exists as a monomer, trimer and hexamer. Oligomeric states form a tripartite complex with tRNA and PAB1947 methyltransferase.

In terms of biological role, activates the tRNA-splicing ligase complex by facilitating the enzymatic turnover of catalytic subunit RtcB. Acts by promoting the guanylylation of RtcB, a key intermediate step in tRNA ligation. Can also alter the NTP specificity of RtcB such that ATP, dGTP or ITP is used efficiently. Chaperone or modulator of proteins involved in DNA or RNA processing. Protects the tRNA (cytosine-5-)-methyltransferase PAB1947 against aggregation and increases its specificity. In Pyrococcus abyssi (strain GE5 / Orsay), this protein is Protein archease.